The chain runs to 619 residues: Probable serine/threonine-protein kinase WNK8 (619 aa).

The segment covering 1-14 (MSGARRCGDRRSER) has biased composition (basic and acidic residues). The disordered stretch occupies residues 1 to 30 (MSGARRCGDRRSERSSVVGDNRNGYVETDP). One can recognise a Protein kinase domain in the interval 35 to 291 (GRLSEVLGKG…AEELLLDPFL (257 aa)). Residues 115-118 (TELF) and K163 each bind ATP. The active-site Proton acceptor is the D180. Disordered stretches follow at residues 293 to 335 (PPQN…AKTT), 419 to 464 (YADD…PGPH), 508 to 555 (CSAS…SMVD), and 585 to 619 (GFRD…HYMF). Residues 419–428 (YADDDDDDDV) are compositionally biased toward acidic residues. The segment covering 439–448 (SSSPTSSQGS) has biased composition (low complexity). Residues 602–619 (QHRRRSSSKVDHKHHYMF) are compositionally biased toward basic residues.

It belongs to the protein kinase superfamily. Ser/Thr protein kinase family. WNK subfamily.

The catalysed reaction is L-seryl-[protein] + ATP = O-phospho-L-seryl-[protein] + ADP + H(+). It catalyses the reaction L-threonyl-[protein] + ATP = O-phospho-L-threonyl-[protein] + ADP + H(+). The chain is Probable serine/threonine-protein kinase WNK8 (WNK8) from Oryza sativa subsp. japonica (Rice).